Consider the following 567-residue polypeptide: Malate synthase, glyoxysomal (567 aa).

R182 acts as the Proton acceptor in catalysis. D468 acts as the Proton donor in catalysis. The Microbody targeting signal motif lies at 565-567; it reads SKL.

The protein belongs to the malate synthase family.

Its subcellular location is the glyoxysome. It catalyses the reaction glyoxylate + acetyl-CoA + H2O = (S)-malate + CoA + H(+). The protein operates within carbohydrate metabolism; glyoxylate cycle; (S)-malate from isocitrate: step 2/2. This is Malate synthase, glyoxysomal from Gossypium hirsutum (Upland cotton).